Consider the following 347-residue polypeptide: Probable dual-specificity RNA methyltransferase RlmN (347 aa).

Glu90 acts as the Proton acceptor in catalysis. The region spanning 96 to 326 (YKHGNSICIS…VTVRREMGSD (231 aa)) is the Radical SAM core domain. A disulfide bond links Cys103 and Cys331. Positions 110, 114, and 117 each coordinate [4Fe-4S] cluster. Residues 157–158 (GE), Ser189, 212–214 (SLH), and Asn288 each bind S-adenosyl-L-methionine. The S-methylcysteine intermediate role is filled by Cys331.

The protein belongs to the radical SAM superfamily. RlmN family. [4Fe-4S] cluster is required as a cofactor.

It localises to the cytoplasm. The catalysed reaction is adenosine(2503) in 23S rRNA + 2 reduced [2Fe-2S]-[ferredoxin] + 2 S-adenosyl-L-methionine = 2-methyladenosine(2503) in 23S rRNA + 5'-deoxyadenosine + L-methionine + 2 oxidized [2Fe-2S]-[ferredoxin] + S-adenosyl-L-homocysteine. The enzyme catalyses adenosine(37) in tRNA + 2 reduced [2Fe-2S]-[ferredoxin] + 2 S-adenosyl-L-methionine = 2-methyladenosine(37) in tRNA + 5'-deoxyadenosine + L-methionine + 2 oxidized [2Fe-2S]-[ferredoxin] + S-adenosyl-L-homocysteine. In terms of biological role, specifically methylates position 2 of adenine 2503 in 23S rRNA and position 2 of adenine 37 in tRNAs. The protein is Probable dual-specificity RNA methyltransferase RlmN of Clostridium botulinum (strain Eklund 17B / Type B).